We begin with the raw amino-acid sequence, 500 residues long: Maturase K (500 aa).

This sequence belongs to the intron maturase 2 family. MatK subfamily.

It is found in the plastid. The protein resides in the chloroplast. In terms of biological role, usually encoded in the trnK tRNA gene intron. Probably assists in splicing its own and other chloroplast group II introns. This chain is Maturase K, found in Prunus laurocerasus (Cherry laurel).